The chain runs to 282 residues: Large ribosomal subunit protein uL2 (282 aa).

Positions 215-282 (RHKGIRPTVR…IIRSRKETKK (68 aa)) are disordered. Over residues 263–282 (RNPKKPSTKLIIRSRKETKK) the composition is skewed to basic residues.

It belongs to the universal ribosomal protein uL2 family. As to quaternary structure, part of the 50S ribosomal subunit. Forms a bridge to the 30S subunit in the 70S ribosome.

One of the primary rRNA binding proteins. Required for association of the 30S and 50S subunits to form the 70S ribosome, for tRNA binding and peptide bond formation. It has been suggested to have peptidyltransferase activity; this is somewhat controversial. Makes several contacts with the 16S rRNA in the 70S ribosome. This chain is Large ribosomal subunit protein uL2, found in Mesomycoplasma hyopneumoniae (strain 7448) (Mycoplasma hyopneumoniae).